The following is a 435-amino-acid chain: 3-ketoacyl-CoA thiolase (435 aa).

C98 acts as the Acyl-thioester intermediate in catalysis. Residues H391 and C421 each act as proton acceptor in the active site.

The protein belongs to the thiolase-like superfamily. Thiolase family. As to quaternary structure, heterotetramer of two alpha chains (FadJ) and two beta chains (FadI).

It is found in the cytoplasm. The enzyme catalyses an acyl-CoA + acetyl-CoA = a 3-oxoacyl-CoA + CoA. It functions in the pathway lipid metabolism; fatty acid beta-oxidation. Catalyzes the final step of fatty acid oxidation in which acetyl-CoA is released and the CoA ester of a fatty acid two carbons shorter is formed. This is 3-ketoacyl-CoA thiolase from Vibrio vulnificus (strain CMCP6).